The primary structure comprises 328 residues: WUSCHEL-related homeobox 6 (328 aa).

The span at 1–11 shows a compositional bias: polar residues; the sequence is MEGSSNSPDRQ. The segment at 1 to 45 is disordered; sequence MEGSSNSPDRQSSGGSPPEERGGGGSGGGGGRSAAGEPVRSRWTP. The segment covering 23-33 has biased composition (gly residues); that stretch reads GGGSGGGGGRS. Positions 38–102 form a DNA-binding region, homeobox; WUS-type; sequence PVRSRWTPKP…NRRSRSRRRQ (65 aa).

Belongs to the WUS homeobox family.

The protein resides in the nucleus. Functionally, transcription factor which may be involved in developmental processes. The sequence is that of WUSCHEL-related homeobox 6 (WOX6) from Oryza sativa subsp. indica (Rice).